Consider the following 272-residue polypeptide: Cell division protein ZipA (272 aa).

The Periplasmic segment spans residues 1-4; it reads METH. The chain crosses the membrane as a helical span at residues 5-25; sequence ILFFILAGLLIAVLIGYSIWS. Topologically, residues 26–272 are cytoplasmic; it reads ARREKSRIFS…RQNYLLRVAN (247 aa).

This sequence belongs to the ZipA family. As to quaternary structure, interacts with FtsZ via their C-terminal domains.

The protein resides in the cell inner membrane. Essential cell division protein that stabilizes the FtsZ protofilaments by cross-linking them and that serves as a cytoplasmic membrane anchor for the Z ring. Also required for the recruitment to the septal ring of downstream cell division proteins. The polypeptide is Cell division protein ZipA (Glaesserella parasuis serovar 5 (strain SH0165) (Haemophilus parasuis)).